The sequence spans 477 residues: Ribulose bisphosphate carboxylase large chain (477 aa).

Residues 1 to 2 (MS) constitute a propeptide that is removed on maturation. N-acetylproline is present on proline 3. At lysine 14 the chain carries N6,N6,N6-trimethyllysine. Substrate is bound by residues asparagine 123 and threonine 173. Lysine 175 functions as the Proton acceptor in the catalytic mechanism. Residue lysine 177 participates in substrate binding. Lysine 201, aspartate 203, and glutamate 204 together coordinate Mg(2+). Residue lysine 201 is modified to N6-carboxylysine. The active-site Proton acceptor is the histidine 294. Positions 295, 327, and 379 each coordinate substrate.

The protein belongs to the RuBisCO large chain family. Type I subfamily. In terms of assembly, heterohexadecamer of 8 large chains and 8 small chains; disulfide-linked. The disulfide link is formed within the large subunit homodimers. It depends on Mg(2+) as a cofactor. The disulfide bond which can form in the large chain dimeric partners within the hexadecamer appears to be associated with oxidative stress and protein turnover.

The protein localises to the plastid. The protein resides in the chloroplast. It carries out the reaction 2 (2R)-3-phosphoglycerate + 2 H(+) = D-ribulose 1,5-bisphosphate + CO2 + H2O. It catalyses the reaction D-ribulose 1,5-bisphosphate + O2 = 2-phosphoglycolate + (2R)-3-phosphoglycerate + 2 H(+). In terms of biological role, ruBisCO catalyzes two reactions: the carboxylation of D-ribulose 1,5-bisphosphate, the primary event in carbon dioxide fixation, as well as the oxidative fragmentation of the pentose substrate in the photorespiration process. Both reactions occur simultaneously and in competition at the same active site. The sequence is that of Ribulose bisphosphate carboxylase large chain from Cichorium intybus (Chicory).